Here is a 178-residue protein sequence, read N- to C-terminus: 3-hydroxyacyl-[acyl-carrier-protein] dehydratase FabZ (178 aa).

Residue His54 is part of the active site.

Belongs to the thioester dehydratase family. FabZ subfamily.

The protein resides in the cytoplasm. The enzyme catalyses a (3R)-hydroxyacyl-[ACP] = a (2E)-enoyl-[ACP] + H2O. Its function is as follows. Involved in unsaturated fatty acids biosynthesis. Catalyzes the dehydration of short chain beta-hydroxyacyl-ACPs and long chain saturated and unsaturated beta-hydroxyacyl-ACPs. This Yersinia enterocolitica protein is 3-hydroxyacyl-[acyl-carrier-protein] dehydratase FabZ.